Consider the following 169-residue polypeptide: Fumarase E (169 aa).

This sequence belongs to the MtlR/FumE family. Homodimer.

It carries out the reaction (S)-malate = fumarate + H2O. Its function is as follows. In vitro catalyzes the addition of water to fumarate, forming malate. Cannot catalyze the reverse reaction. Cannot use the cis-isomer maleate as substrate. This is Fumarase E from Shigella flexneri.